The primary structure comprises 121 residues: Large ribosomal subunit protein uL14 (121 aa).

This sequence belongs to the universal ribosomal protein uL14 family. In terms of assembly, part of the 50S ribosomal subunit. Forms a cluster with proteins L3 and L19. In the 70S ribosome, L14 and L19 interact and together make contacts with the 16S rRNA in bridges B5 and B8.

Its function is as follows. Binds to 23S rRNA. Forms part of two intersubunit bridges in the 70S ribosome. This Prochlorococcus marinus (strain SARG / CCMP1375 / SS120) protein is Large ribosomal subunit protein uL14.